The primary structure comprises 534 residues: Zinc finger protein 69 homolog B (534 aa).

Glycyl lysine isopeptide (Lys-Gly) (interchain with G-Cter in SUMO2) cross-links involve residues lysine 37 and lysine 40. In terms of domain architecture, KRAB spans 74-145 (LTFKDVSVDF…ERDISGVPSS (72 aa)). Residues lysine 178 and lysine 235 each participate in a glycyl lysine isopeptide (Lys-Gly) (interchain with G-Cter in SUMO2) cross-link. C2H2-type zinc fingers lie at residues 279–301 (FECN…MRIH), 307–329 (FRCK…QRIH), 335–357 (YECK…VRIH), 363–385 (YECR…LRTH), 391–413 (FTCK…EIIH), 419–441 (YICN…QRTH), 447–469 (YKCK…QRVH), 475–497 (YECS…QRIH), and 503–525 (YDCN…CKTH).

The protein belongs to the krueppel C2H2-type zinc-finger protein family.

The protein resides in the nucleus. May be involved in transcriptional regulation. Essential for Golgi structural integrity. The polypeptide is Zinc finger protein 69 homolog B (ZFP69B) (Homo sapiens (Human)).